The primary structure comprises 183 residues: MINVEIIKNYSKWREHKQINKALIKKITQKTLSQFDNFSEIKQFELSILLTNNEEILTLNKQFRNIEKATNVLSFPANELNWQDLRFSGNEIASSNKPIILENLGDSDYMHLGDIAFCYDVIYNESYEQQKTFENHFIHLLIHSILHLIGFDHQNDTETKIMENLEIEILAHFGISSPYLLIK.

Residues His-143, His-147, and His-153 each coordinate Zn(2+).

It belongs to the endoribonuclease YbeY family. It depends on Zn(2+) as a cofactor.

The protein resides in the cytoplasm. In terms of biological role, single strand-specific metallo-endoribonuclease involved in late-stage 70S ribosome quality control and in maturation of the 3' terminus of the 16S rRNA. This is Endoribonuclease YbeY from Rickettsia bellii (strain OSU 85-389).